The primary structure comprises 509 residues: Dihydrolipoyl dehydrogenase, mitochondrial (509 aa).

Residues 1–35 (MQSWSRVYCTLAKRGHFNRIAHGLQGVSAVPLRTY) constitute a mitochondrion transit peptide. The residue at position 66 (Lys-66) is an N6-acetyllysine; alternate. Lys-66 bears the N6-succinyllysine; alternate mark. FAD-binding positions include 71 to 80 (EKNETLGGTC) and Lys-89. Cys-80 and Cys-85 are oxidised to a cystine. 4 positions are modified to N6-acetyllysine; alternate: Lys-104, Lys-122, Lys-132, and Lys-143. Residues Lys-104, Lys-122, Lys-132, and Lys-143 each carry the N6-succinyllysine; alternate modification. Gly-154 contacts FAD. N6-succinyllysine occurs at positions 159 and 166. 183–185 (TGS) is an FAD binding site. NAD(+) contacts are provided by residues 220–227 (GAGVIGVE) and Glu-243. N6-succinyllysine occurs at positions 273 and 277. NAD(+) is bound at residue Val-278. Phosphoserine is present on residues Ser-285 and Ser-297. Gly-314 lines the NAD(+) pocket. Lys-346 is subject to N6-acetyllysine. FAD is bound by residues Asp-355 and 361-364 (MLAH). Lys-410 bears the N6-acetyllysine; alternate mark. Lys-410 carries the post-translational modification N6-succinyllysine; alternate. N6-acetyllysine is present on residues Lys-417 and Lys-420. Position 430 is an N6-succinyllysine (Lys-430). The active-site Proton acceptor is His-487. The residue at position 502 (Ser-502) is a Phosphoserine. Lys-505 is subject to N6-acetyllysine; alternate. Lys-505 carries the post-translational modification N6-succinyllysine; alternate.

It belongs to the class-I pyridine nucleotide-disulfide oxidoreductase family. In terms of assembly, homodimer. Part of the multimeric pyruvate dehydrogenase complex that contains multiple copies of pyruvate dehydrogenase (subunits PDHA (PDHA1 or PDHA2) and PDHB, E1), dihydrolipoamide acetyltransferase (DLAT, E2) and lipoamide dehydrogenase (DLD, E3). These subunits are bound to an inner core composed of about 48 DLAT and 12 PDHX molecules (by non covalent bonds). The 2-oxoglutarate dehydrogenase complex is composed of OGDH (2-oxoglutarate dehydrogenase; E1), DLST (dihydrolipoamide succinyltransferase; E2), DLD (dihydrolipoamide dehydrogenase; E3) and the assembly factor KGD4. It contains multiple copies of the three enzymatic components (E1, E2 and E3). In the nucleus, the 2-oxoglutarate dehydrogenase complex associates with KAT2A. Interacts with PDHX. FAD is required as a cofactor. Tyrosine phosphorylated. In terms of tissue distribution, expressed in heart (at protein level).

It is found in the mitochondrion matrix. It localises to the nucleus. Its subcellular location is the cell projection. The protein localises to the cilium. The protein resides in the flagellum. It is found in the cytoplasmic vesicle. It localises to the secretory vesicle. Its subcellular location is the acrosome. It carries out the reaction N(6)-[(R)-dihydrolipoyl]-L-lysyl-[protein] + NAD(+) = N(6)-[(R)-lipoyl]-L-lysyl-[protein] + NADH + H(+). Its function is as follows. Lipoamide dehydrogenase is a component of the glycine cleavage system as well as an E3 component of three alpha-ketoacid dehydrogenase complexes (pyruvate-, alpha-ketoglutarate-, and branched-chain amino acid-dehydrogenase complex). The 2-oxoglutarate dehydrogenase complex is mainly active in the mitochondrion. A fraction of the 2-oxoglutarate dehydrogenase complex also localizes in the nucleus and is required for lysine succinylation of histones: associates with KAT2A on chromatin and provides succinyl-CoA to histone succinyltransferase KAT2A. In monomeric form may have additional moonlighting function as serine protease. Involved in the hyperactivation of spermatazoa during capacitation and in the spermatazoal acrosome reaction. This Sus scrofa (Pig) protein is Dihydrolipoyl dehydrogenase, mitochondrial (DLD).